The following is a 237-amino-acid chain: E3 ubiquitin-protein ligase RNF166 (237 aa).

The segment at 33-73 (CPICLEVYHRPVAIGSCGHTFCGECLQPCLQVPSPLCPLCR) adopts an RING-type zinc-finger fold. Cys98, Cys101, His113, and Cys117 together coordinate Zn(2+). The segment at 98-117 (CRGCNKKVTLAKMRAHISSC) adopts a C2HC RNF-type zinc-finger fold. Residues 221–237 (DEEAAFQAALALSLSEN) enclose the UIM domain.

It localises to the cytoplasm. It catalyses the reaction S-ubiquitinyl-[E2 ubiquitin-conjugating enzyme]-L-cysteine + [acceptor protein]-L-lysine = [E2 ubiquitin-conjugating enzyme]-L-cysteine + N(6)-ubiquitinyl-[acceptor protein]-L-lysine.. It participates in protein modification; protein ubiquitination. E3 ubiquitin-protein ligase that promotes the ubiquitination of different substrates. In turn, participates in different biological processes including interferon production or autophagy. Plays a role in the activation of RNA virus-induced interferon-beta production by promoting the ubiquitination of TRAF3 and TRAF6. Also plays a role in the early recruitment of autophagy adapters to bacteria. Mediates 'Lys-29' and 'Lys-33'-linked ubiquitination of SQSTM1 leading to xenophagic targeting of bacteria and inhibition of their replication. This Mus musculus (Mouse) protein is E3 ubiquitin-protein ligase RNF166 (Rnf166).